The chain runs to 435 residues: Tektin-4 (435 aa).

The segment covering 60–69 (DQSERQRHES) has biased composition (basic and acidic residues). Positions 60-96 (DQSERQRHESQQLATETQALAQRTQQDSTRTVGERLQ) are disordered. The segment covering 70 to 85 (QQLATETQALAQRTQQ) has biased composition (low complexity). 3 coiled-coil regions span residues 102–180 (KSEL…LLKR), 310–336 (LHKT…DKEA), and 363–411 (FRLL…TNSL).

The protein belongs to the tektin family. As to quaternary structure, microtubule inner protein component of sperm flagellar doublet microtubules. Ubiquitinated, leading to its degradation. Deubiquitinated by USP16, promoting its stability. Strongly expressed in spermatozoa. Also detected at low levels in pancreas. Expressed in airway epithelial cells.

It is found in the cytoplasm. It localises to the cytoskeleton. Its subcellular location is the cilium axoneme. The protein localises to the flagellum axoneme. In terms of biological role, microtubule inner protein (MIP) part of the dynein-decorated doublet microtubules (DMTs) in cilia and flagellar axoneme. Forms filamentous polymers in the walls of ciliary and flagellar microtubules. Contributes to normal sperm motility. The polypeptide is Tektin-4 (Homo sapiens (Human)).